A 246-amino-acid polypeptide reads, in one-letter code: 3'(2'),5'-bisphosphate nucleotidase CysQ (246 aa).

The Mg(2+) site is built by glutamate 64, aspartate 83, leucine 85, aspartate 86, and aspartate 205. Position 64 (glutamate 64) interacts with substrate. Residues 85 to 88 (LDGT) and aspartate 205 each bind substrate.

Belongs to the inositol monophosphatase superfamily. CysQ family. Requires Mg(2+) as cofactor.

The protein resides in the cell inner membrane. The catalysed reaction is adenosine 3',5'-bisphosphate + H2O = AMP + phosphate. Its function is as follows. Converts adenosine-3',5'-bisphosphate (PAP) to AMP. The sequence is that of 3'(2'),5'-bisphosphate nucleotidase CysQ from Escherichia coli O6:H1 (strain CFT073 / ATCC 700928 / UPEC).